Consider the following 446-residue polypeptide: Ribosomal protein uS12 methylthiotransferase RimO (446 aa).

The MTTase N-terminal domain maps to 10 to 122 (KTLHMVSLGC…IDELVNEKRS (113 aa)). Residues C19, C53, C85, C154, C158, and C161 each contribute to the [4Fe-4S] cluster site. One can recognise a Radical SAM core domain in the interval 140 to 369 (TGSSYHAYVK…GEIISQTTQE (230 aa)). The TRAM domain occupies 372-446 (ESEVGKTFEV…GDKLLATVIK (75 aa)).

The protein belongs to the methylthiotransferase family. RimO subfamily. It depends on [4Fe-4S] cluster as a cofactor.

The protein resides in the cytoplasm. It carries out the reaction L-aspartate(89)-[ribosomal protein uS12]-hydrogen + (sulfur carrier)-SH + AH2 + 2 S-adenosyl-L-methionine = 3-methylsulfanyl-L-aspartate(89)-[ribosomal protein uS12]-hydrogen + (sulfur carrier)-H + 5'-deoxyadenosine + L-methionine + A + S-adenosyl-L-homocysteine + 2 H(+). Functionally, catalyzes the methylthiolation of an aspartic acid residue of ribosomal protein uS12. The protein is Ribosomal protein uS12 methylthiotransferase RimO of Aliarcobacter butzleri (strain RM4018) (Arcobacter butzleri).